Here is a 579-residue protein sequence, read N- to C-terminus: ATP-dependent RNA helicase SUV3, mitochondrial (579 aa).

Residues 1–59 (MAVAAALLRRRALYSALASPSWLHDTSSCYICSISGTHSLVNHPNLRLQRGYHNSGKFD) constitute a mitochondrion transit peptide. The region spanning 72–213 (NAREKKRNVF…QRILEPTGDV (142 aa)) is the Helicase ATP-binding domain. 85 to 92 (GPTNSGKT) lines the ATP pocket. In terms of domain architecture, Helicase C-terminal spans 214-388 (VTVQYYERLS…GLFPTFDVLS (175 aa)). Asn-309 carries N-linked (GlcNAc...) asparagine glycosylation.

Belongs to the helicase family. As to quaternary structure, homodimer; in free form. Component of the mitochondrial degradosome (mtEXO) complex which is a heteropentamer containing 2 copies of SUPV3L1 and 3 copies of PNPT1. The cofactor is Mg(2+). Mn(2+) is required as a cofactor.

Its subcellular location is the nucleus. It localises to the mitochondrion matrix. It is found in the mitochondrion nucleoid. It catalyses the reaction ATP + H2O = ADP + phosphate + H(+). Functionally, major helicase player in mitochondrial RNA metabolism. Component of the mitochondrial degradosome (mtEXO) complex, that degrades 3' overhang double-stranded RNA with a 3'-to-5' directionality in an ATP-dependent manner. ATPase and ATP-dependent multisubstrate helicase, able to unwind double-stranded (ds) DNA and RNA, and RNA/DNA heteroduplexes in the 5'-to-3' direction. Plays a role in the RNA surveillance system in mitochondria; regulates the stability of mature mRNAs, the removal of aberrantly formed mRNAs and the rapid degradation of non coding processing intermediates. Confers salinity and drought stress tolerances by maintaining both photosynthesis and antioxidant machinery, probably via an increase in plant hormones levels such as gibberellic acid (GA(3)), the cytokinin zeatin (Z) and indole-3-acetic acid (IAA). This chain is ATP-dependent RNA helicase SUV3, mitochondrial, found in Oryza sativa subsp. japonica (Rice).